Here is a 711-residue protein sequence, read N- to C-terminus: Early transcription factor 82 kDa subunit (711 aa).

This sequence belongs to the poxviridae VETF large subunit family. As to quaternary structure, heterodimer of a 70 kDa and a 82 kDa subunit. Part of the early transcription complex composed of ETF, RAP94, and the DNA-directed RNA polymerase.

Its subcellular location is the virion. Acts with RNA polymerase to initiate transcription from early gene promoters. Is recruited by the RPO-associated protein of 94 kDa (RAP94) to form the early transcription complex, which also contains the core RNA polymerase. ETF heterodimer binds to early gene promoters. This is Early transcription factor 82 kDa subunit (VETFL) from Oryctolagus cuniculus (Rabbit).